The sequence spans 67 residues: Small ribosomal subunit protein eS17 (67 aa).

The protein belongs to the eukaryotic ribosomal protein eS17 family.

This chain is Small ribosomal subunit protein eS17, found in Pyrococcus horikoshii (strain ATCC 700860 / DSM 12428 / JCM 9974 / NBRC 100139 / OT-3).